Here is a 461-residue protein sequence, read N- to C-terminus: Nuclear distribution protein PAC1 (461 aa).

The LisH domain occupies 9–41 (QAEELHKAIIAYLSANNLSSSATALRTELGLAE). A coiled-coil region spans residues 61–88 (TSVVRLQKKIMDLESRNNALQSELDNAT). WD repeat units lie at residues 114–155 (SHQN…RTIK), 157–197 (HTRP…KNIR), 201–248 (GHDH…CLKT), 251–290 (GHTAWIRDVYPSLDGRYLLSTGDDSTVRLWDLSVTNPENR), 295–355 (GHDH…LKTL), 357–396 (GHDNWVRALVFHPGGRYLLSVSDDKTLRCWDLEQDGKCVK), 401–444 (VHER…VRIR), and 446–461 (VIATGSVDMKLRIFAN).

It belongs to the WD repeat LIS1/nudF family. In terms of assembly, self-associates. Interacts with NDL1 and dynein.

The protein resides in the cytoplasm. It localises to the cytoskeleton. Its subcellular location is the spindle pole. In terms of biological role, positively regulates the activity of the minus-end directed microtubule motor protein dynein. May enhance dynein-mediated microtubule sliding by targeting dynein to the microtubule plus end. Required for nuclear migration during vegetative growth as well as development. Required for retrograde early endosome (EE) transport from the hyphal tip. Required for localization of dynein to the mitotic spindle poles. Recruits additional proteins to the dynein complex at SPBs. This Pyricularia oryzae (strain 70-15 / ATCC MYA-4617 / FGSC 8958) (Rice blast fungus) protein is Nuclear distribution protein PAC1.